The chain runs to 194 residues: uncharacterized protein (194 aa).

The SIS domain maps to 34–192; sequence VMQCLLGGNK…CELVDQTLFP (159 aa).

The protein belongs to the SIS family. DiaA subfamily.

This is an uncharacterized protein from Haemophilus influenzae (strain ATCC 51907 / DSM 11121 / KW20 / Rd).